The following is a 373-amino-acid chain: Unsaturated rhamnogalacturonyl hydrolase YteR (373 aa).

Residues 40–41 (HY), aspartate 88, and 132–136 (HKDGY) each bind substrate. The active-site Proton donor is the aspartate 143. Substrate is bound by residues 213–217 (RSIGW) and 333–334 (TS).

The protein belongs to the glycosyl hydrolase 105 family. As to quaternary structure, monomer.

The protein localises to the cytoplasm. The catalysed reaction is 2-O-(4-deoxy-beta-L-threo-hex-4-enopyranuronosyl)-alpha-L-rhamnose + H2O = 5-dehydro-4-deoxy-D-glucuronate + L-rhamnopyranose. In terms of biological role, catalyzes the hydrolysis of unsaturated rhamnogalacturonan disaccharide to yield unsaturated D-galacturonic acid and L-rhamnose. It cannot act on unsaturated glucuronyl hydrolase (UGL) substrates containing unsaturated D-glucuronic acid at the non-reducing terminus, although the active pockets of YesR and UGL are very similar. This Bacillus subtilis (strain 168) protein is Unsaturated rhamnogalacturonyl hydrolase YteR (yteR).